The primary structure comprises 45 residues: Conotoxin reg3.12 (45 aa).

The propeptide occupies Asp1–Lys31. Cystine bridges form between Cys32-Cys44, Cys33-Cys42, and Cys38-Cys45.

This sequence belongs to the conotoxin M superfamily. In terms of tissue distribution, expressed by the venom duct.

The protein resides in the secreted. This is Conotoxin reg3.12 from Conus regius (Crown cone).